A 444-amino-acid polypeptide reads, in one-letter code: CCA-adding enzyme (444 aa).

Positions 57 and 60 each coordinate ATP. CTP-binding residues include Ser57 and Arg60. Residues Asp69, Asp71, and Asp124 each coordinate Mg(2+). 3 residues coordinate ATP: His147, Lys168, and Tyr177. The CTP site is built by His147, Lys168, and Tyr177.

The protein belongs to the tRNA nucleotidyltransferase/poly(A) polymerase family. Archaeal CCA-adding enzyme subfamily. As to quaternary structure, homodimer. Requires Mg(2+) as cofactor.

It catalyses the reaction a tRNA precursor + 2 CTP + ATP = a tRNA with a 3' CCA end + 3 diphosphate. The catalysed reaction is a tRNA with a 3' CCA end + 2 CTP + ATP = a tRNA with a 3' CCACCA end + 3 diphosphate. Catalyzes the addition and repair of the essential 3'-terminal CCA sequence in tRNAs without using a nucleic acid template. Adds these three nucleotides in the order of C, C, and A to the tRNA nucleotide-73, using CTP and ATP as substrates and producing inorganic pyrophosphate. tRNA 3'-terminal CCA addition is required both for tRNA processing and repair. Also involved in tRNA surveillance by mediating tandem CCA addition to generate a CCACCA at the 3' terminus of unstable tRNAs. While stable tRNAs receive only 3'-terminal CCA, unstable tRNAs are marked with CCACCA and rapidly degraded. This Methanococcus maripaludis (strain C7 / ATCC BAA-1331) protein is CCA-adding enzyme.